We begin with the raw amino-acid sequence, 576 residues long: Aspartate--tRNA ligase, cytoplasmic 1 (576 aa).

Positions 1–78 (MSETTPVPVG…NWGELPMNQS (78 aa)) are disordered. Basic and acidic residues predominate over residues 20-43 (LKKEQKKLEKEKKIAEAKAKKAAE). Glutamate 302 contacts L-aspartate. The tract at residues 324–327 (QLYK) is aspartate. Arginine 346 is a binding site for L-aspartate. Residues 346–348 (RAE), 354–356 (RHL), and glutamate 499 each bind ATP. L-aspartate contacts are provided by serine 502 and arginine 506. Position 547–550 (547–550 (GLER)) interacts with ATP.

It belongs to the class-II aminoacyl-tRNA synthetase family. Type 2 subfamily.

Its subcellular location is the cytoplasm. It catalyses the reaction tRNA(Asp) + L-aspartate + ATP = L-aspartyl-tRNA(Asp) + AMP + diphosphate. This Dictyostelium discoideum (Social amoeba) protein is Aspartate--tRNA ligase, cytoplasmic 1 (aspS1).